Here is a 177-residue protein sequence, read N- to C-terminus: Adenine phosphoribosyltransferase (177 aa).

It belongs to the purine/pyrimidine phosphoribosyltransferase family. In terms of assembly, homodimer.

It is found in the cytoplasm. It carries out the reaction AMP + diphosphate = 5-phospho-alpha-D-ribose 1-diphosphate + adenine. It functions in the pathway purine metabolism; AMP biosynthesis via salvage pathway; AMP from adenine: step 1/1. Functionally, catalyzes a salvage reaction resulting in the formation of AMP, that is energically less costly than de novo synthesis. The chain is Adenine phosphoribosyltransferase from Chlorobium luteolum (strain DSM 273 / BCRC 81028 / 2530) (Pelodictyon luteolum).